An 870-amino-acid chain; its full sequence is MRGILKKISQINFGLMSPEDIRKMSVTQIVTPDTYDEDGYPIENGLMDPRLGVIDPSLRCRTCGAKGGECPGHFGSINLARPVIHVGFADTIHKILRSTCRKCGRVLLTETEIEEYRQRILDAMEKEESLTPIIKEIYAEARRDKCPHCEEEQEEIKLDKPVSIVEGDYKLTPSEVRERLERISDDDALILGVNPEVARPEWMVLTVLPVPPVTVRPSITLETGERSEDDLTHKLVDILRINQRLKENMEAGAPQLIVEDLWELLQYHVTTYFDNEASGVPPARHRSGRPLKTLAQRLKGKEGRFRSNLSGKRVNFSARTVISPDPNISINEVGVPEIIAREVTVPVYVTEWNIDRMREYIENGPDVHPGANYVIRPDGRKIRIYNETKEVVLENLKPGYIVERHLKDGDIVLFNRQPSLHRMSMMAHQVRVLPYKTFRLNLCVCPPYNADFDGDEMNMHVFQTEESRAEAKTLMRVQEHILSPRFGGPIIGGIHDHISGAYLLTRKSAVFSEEKVFQILKKAGLPLPDSRGRDWTGKEIFSMVLPDDLNMVYRAEVCRKCEECLEMECENDAYVVIENGQLISGVIDEKAYGAFAGKILDHIVKEYGTDAAREFLDSATKLAIAGIMHAGFTTSTNDEEIPEEARERIEAHLRNAEARVDQLIEAYENGELEPLPGRSLEETLEMKIMQVLGEARDKSGEIAESYFDMDENHAVIMALTGARGSMLNLTQITACVGQQSVRGGRISRGYDNRTLPHFKKGELGAKSRGFVHSSYKEGLDPIEFFFHAMGGREGLVDTAIRTAQSGYMQRRLVNALQDLTVDENGRVVDNRGVIIQNRFGEDGVDPAKSDYGKIVDLDKLVEEIRLKSKG.

Positions 60, 63, 70, 73, 100, 103, 146, and 149 each coordinate Zn(2+). Residues D451, D453, and D455 each coordinate Mg(2+).

It belongs to the RNA polymerase beta' chain family. In terms of assembly, part of the RNA polymerase complex. It depends on Mg(2+) as a cofactor. Zn(2+) serves as cofactor.

Its subcellular location is the cytoplasm. It catalyses the reaction RNA(n) + a ribonucleoside 5'-triphosphate = RNA(n+1) + diphosphate. In terms of biological role, DNA-dependent RNA polymerase (RNAP) catalyzes the transcription of DNA into RNA using the four ribonucleoside triphosphates as substrates. Forms the clamp head domain. The chain is DNA-directed RNA polymerase subunit Rpo1N from Methanothermobacter thermautotrophicus (strain ATCC 29096 / DSM 1053 / JCM 10044 / NBRC 100330 / Delta H) (Methanobacterium thermoautotrophicum).